Reading from the N-terminus, the 873-residue chain is Zinc fingers and homeoboxes protein 1 (873 aa).

Positions 1–63 (MASRRKSTTP…ESVDSDNQQN (63 aa)) are disordered. The span at 18-30 (QDPDLELISDLEE) shows a compositional bias: acidic residues. The residue at position 36 (Thr36) is a Phosphothreonine. Phosphoserine occurs at positions 45, 47, and 48. C2H2-type zinc fingers lie at residues 70–93 (YECK…DSEH) and 102–125 (YVCV…LKYH). Residue Lys159 forms a Glycyl lysine isopeptide (Lys-Gly) (interchain with G-Cter in SUMO2) linkage. The interval 198 to 247 (VHHNSAEGTSEEKENGVKASREENAENTSSSASESNTSTSTVNQVHPSPA) is disordered. Phosphoserine is present on Ser202. The span at 207–221 (SEEKENGVKASREEN) shows a compositional bias: basic and acidic residues. The span at 223-238 (ENTSSSASESNTSTST) shows a compositional bias: low complexity. Residues 272–432 (NSNLVPKVLI…QTNVQKSQVP (161 aa)) are required for dimerization. Positions 272 to 564 (NSNLVPKVLI…SQPKQSWNPF (293 aa)) are required for interaction with NFYA. The homeobox 1 DNA-binding region spans 284-346 (NSIPTYNAAL…LKHGVSWTPE (63 aa)). Residues 430–455 (QVPAAQPAAETKPATAAVPSSPSVRP) are disordered. Glycyl lysine isopeptide (Lys-Gly) (interchain with G-Cter in SUMO2) cross-links involve residues Lys441 and Lys485. Residues 464–526 (SFGIRAKKTK…YNQRNSKSNQ (63 aa)) constitute a DNA-binding region (homeobox 2). Disordered stretches follow at residues 540–568 (IDSS…PDFA), 627–664 (DEKV…TGKI), and 731–767 (SSSL…KRMN). The span at 551–560 (AAAASQPKQS) shows a compositional bias: low complexity. Residues 569-631 (PQKFKEKTAE…TKALKDEKVE (63 aa)) constitute a DNA-binding region (homeobox 3). A Glycyl lysine isopeptide (Lys-Gly) (interchain with G-Cter in SUMO2) cross-link involves residue Lys629. A Phosphoserine modification is found at Ser648. A DNA-binding region (homeobox 4) is located at residues 660–722 (GTGKICKKTP…YAWKNGNLKW (63 aa)). Residues 734–768 (LNGLSSLRKRGRGRPKGRGRGRPRGRPRGGKRMNT) form a required for nuclear localization region. Positions 740–764 (LRKRGRGRPKGRGRGRPRGRPRGGK) are enriched in basic residues. Position 774 is a phosphoserine (Ser774). The homeobox 5 DNA-binding region spans 777–832 (KFKTGTAILKDYYLKHKFLNEQDLDELVNRSHMGYEQVREWFAERQRRSELGIELF). The disordered stretch occupies residues 829 to 873 (IELFEENEEEDEVIDDQEEDEEETDDSDTWEPPRHVKRKLSKSDD). The span at 831-857 (LFEENEEEDEVIDDQEEDEEETDDSDT) shows a compositional bias: acidic residues. Residues 831–873 (LFEENEEEDEVIDDQEEDEEETDDSDTWEPPRHVKRKLSKSDD) form a required for repressor activity region. Positions 863-873 (HVKRKLSKSDD) are enriched in basic residues.

This sequence belongs to the ZHX family. Forms homodimers. Heterodimer (via HD1 domain) with ZHX2 (via HD1 domain). Also forms a heterodimer with ZHX3 which is a prerequisite for repressor activity. Interacts with ATF7IP and NFYA. Interacts (via homeobox domains) with DNMT3B (via PWWP domain). In terms of tissue distribution, ubiquitously expressed.

The protein localises to the nucleus. Acts as a transcriptional repressor. Increases DNMT3B-mediated repressive transcriptional activity when DNMT3B is tethered to DNA. May link molecule between DNMT3B and other co-repressor proteins. The sequence is that of Zinc fingers and homeoboxes protein 1 (Zhx1) from Rattus norvegicus (Rat).